A 989-amino-acid polypeptide reads, in one-letter code: Translation initiation factor IF-2 (989 aa).

2 disordered regions span residues 28 to 60 (GVTK…TDAD) and 97 to 397 (VRRD…DQNT). 2 stretches are compositionally biased toward basic and acidic residues: residues 40–60 (ETDK…TDAD) and 122–178 (ELQR…EAAK). Low complexity predominate over residues 182-223 (AAAAEAAAREQQTQASKPAQAAQPAAAKAEPVAAKAAEPVVA). Residues 231 to 280 (ERAAAERAAQREAAKKAEDAARQAAEKARAEQEEIAKRRAAAEAEARAIR) show a composition bias toward basic and acidic residues. Low complexity predominate over residues 318–345 (RPAGEAPARPAAKKPAAAAPAATTTPSA). Gly residues predominate over residues 374–387 (TSGGVDRGWRGGPK). One can recognise a tr-type G domain in the interval 489–658 (PRPPVVTVMG…LLQAEVLELK (170 aa)). The tract at residues 498 to 505 (GHVDHGKT) is G1. 498-505 (GHVDHGKT) is a GTP binding site. The tract at residues 523 to 527 (GITQH) is G2. Positions 544–547 (DTPG) are G3. GTP-binding positions include 544–548 (DTPGH) and 598–601 (NKID). The interval 598-601 (NKID) is G4. A G5 region spans residues 634–636 (SAK).

Belongs to the TRAFAC class translation factor GTPase superfamily. Classic translation factor GTPase family. IF-2 subfamily.

It is found in the cytoplasm. One of the essential components for the initiation of protein synthesis. Protects formylmethionyl-tRNA from spontaneous hydrolysis and promotes its binding to the 30S ribosomal subunits. Also involved in the hydrolysis of GTP during the formation of the 70S ribosomal complex. This is Translation initiation factor IF-2 from Paraburkholderia xenovorans (strain LB400).